Consider the following 1072-residue polypeptide: LRR receptor-like serine/threonine-protein kinase RGI5 (1072 aa).

The first 21 residues, 1–21 (MERERSNFFFLFLFCSWVSMA), serve as a signal peptide directing secretion. The Extracellular portion of the chain corresponds to 22 to 706 (QPTLSLSSDG…NGVKSPKIVA (685 aa)). C56 and C63 are oxidised to a cystine. LRR repeat units follow at residues 66–89 (DNRV…DLSS), 90–113 (LSSL…SFGK), 114–138 (LTHL…LGRL), 140–162 (TLQF…ISNL), 164–185 (ALQV…SFGS), 187–211 (VSLQ…LGFL), 212–234 (KNLT…TFGN), 235–259 (LVNL…LGLC), 260–283 (SELR…LGKL), 285–307 (KITS…ISNC), 308–331 (SSLV…LGKL), 332–355 (VWLE…LSNC), 356–379 (SSLI…IGNL), 381–402 (SLQS…SFGN), 403–427 (CTDL…LFSL), 429–451 (RLSK…VAKC), 452–475 (QSLV…IGEL), 477–499 (NLVF…ISNI), 500–523 (TVLE…LGNL), 524–546 (VNLE…SFGN), 548–571 (SYLN…IKNL), 572–595 (QKLT…LGQV), 597–619 (SLTI…TFSD), 620–642 (LTQL…VLGS), and 643–667 (LTSL…PFFK). N80, N97, and N102 each carry an N-linked (GlcNAc...) asparagine glycan. The Small peptide recognition signature appears at 171-172 (QD). Residue N176 is glycosylated (N-linked (GlcNAc...) asparagine). The Small peptide recognition motif lies at 193–196 (RLGG). Residue N213 is glycosylated (N-linked (GlcNAc...) asparagine). 3 consecutive short sequence motifs (small peptide recognition) follow at residues 216-221 (TLGFAA), Y244, and 266-268 (YLH). N306 carries an N-linked (GlcNAc...) asparagine glycan. 2 short sequence motifs (small peptide recognition) span residues 314–317 (DVSA) and 336–338 (QLQ). N-linked (GlcNAc...) asparagine glycosylation is present at N354. Positions 384–388 (SFFLW) match the Small peptide recognition motif. N402 carries an N-linked (GlcNAc...) asparagine glycan. 3 consecutive short sequence motifs (small peptide recognition) follow at residues 410-413 (DLSR), 432-436 (KLLLL), and 456-458 (RLR). An N-linked (GlcNAc...) asparagine glycan is attached at N498. N546 is a glycosylation site (N-linked (GlcNAc...) asparagine). 2 N-linked (GlcNAc...) asparagine glycosylation sites follow: N650 and N655. A helical transmembrane segment spans residues 707-727 (LTAVILASITIAILAAWLLIL). Over 728–1072 (RNNHLYKTSQ…SQPLIKPSSS (345 aa)) the chain is Cytoplasmic. T764 carries the post-translational modification Phosphothreonine. Residues 772 to 1067 (LTDENVIGKG…EWGKTSQPLI (296 aa)) enclose the Protein kinase domain. ATP is bound by residues 778-786 (IGKGCSGIV) and K800. Phosphotyrosine occurs at positions 851 and 887. The active-site Proton acceptor is D900. S936 is subject to Phosphoserine. Phosphotyrosine occurs at positions 944 and 951. A Phosphothreonine modification is found at T952.

It belongs to the protein kinase superfamily. Ser/Thr protein kinase family. Binds to RGF1; this interaction triggers the formation of heterodimers with SERK1. In terms of processing, phosphorylated and ubiquitinated upon interaction with RGF1, thus leading to activation a subsequent degradation. Autophosphorylated. Expressed in roots and hypocotyls.

Its subcellular location is the membrane. It catalyses the reaction L-seryl-[protein] + ATP = O-phospho-L-seryl-[protein] + ADP + H(+). It carries out the reaction L-threonyl-[protein] + ATP = O-phospho-L-threonyl-[protein] + ADP + H(+). Its function is as follows. Together with RGI1, RGI2, RGI3 and RGI4, acts as a receptor of RGF1, a peptide hormone that maintains the postembryonic root stem cell niche by regulating the expression levels and patterns of the transcription factor PLETHORA (PLT). Links RGF1 signal with its downstream components. The protein is LRR receptor-like serine/threonine-protein kinase RGI5 of Arabidopsis thaliana (Mouse-ear cress).